The primary structure comprises 299 residues: uncharacterized protein (299 aa).

Residues 1–20 (MTTKHELVINTNEPSAPNAD) are disordered. The helical transmembrane segment at 172 to 192 (SFFIPPMVVISTPICLGLTVF) threads the bilayer.

The protein belongs to the IIV-6 259R family.

Its subcellular location is the membrane. This is an uncharacterized protein from Acheta domesticus (House cricket).